Consider the following 142-residue polypeptide: Large ribosomal subunit protein bL17 (142 aa).

The protein belongs to the bacterial ribosomal protein bL17 family. As to quaternary structure, part of the 50S ribosomal subunit. Contacts protein L32.

The sequence is that of Large ribosomal subunit protein bL17 from Chlamydia felis (strain Fe/C-56) (Chlamydophila felis).